The chain runs to 478 residues: Probable cyclin-dependent kinase 9 (478 aa).

The span at 1-17 (MSAQNYHAGLHQSSTQR) shows a compositional bias: polar residues. The disordered stretch occupies residues 1–55 (MSAQNYHAGLHQSSTQRPPKRPNTEHAQEPPKRALIGGQTTPSSSGGGQTPNGTN). The span at 22-32 (PNTEHAQEPPK) shows a compositional bias: basic and acidic residues. A Protein kinase domain is found at 85–413 (YEKLNKIGQG…SDEAEDDIWF (329 aa)). ATP-binding positions include 91 to 99 (IGQGTFGEV) and K114. The active-site Proton acceptor is the D217. The interval 444-478 (HANRGRHQNAQQRPNQQQARPSNAIPAGQYRDTIF) is disordered. Residues 451–464 (QNAQQRPNQQQARP) show a composition bias toward low complexity.

Belongs to the protein kinase superfamily. CMGC Ser/Thr protein kinase family. CDC2/CDKX subfamily. As to quaternary structure, associates with cyclin-T (cit-1.1 or cit-1.2) to form P-TEFb.

The protein resides in the nucleus. The enzyme catalyses L-seryl-[protein] + ATP = O-phospho-L-seryl-[protein] + ADP + H(+). It catalyses the reaction L-threonyl-[protein] + ATP = O-phospho-L-threonyl-[protein] + ADP + H(+). The catalysed reaction is [DNA-directed RNA polymerase] + ATP = phospho-[DNA-directed RNA polymerase] + ADP + H(+). Essential member of the cyclin-dependent kinase pair (CDK9/cyclin-T) complex, also called positive transcription elongation factor B (P-TEFb), which is proposed to facilitate the transition from abortive to production elongation by phosphorylating the CTD (C-terminal domain) of the large subunit of RNA polymerase II (RNAP II) and spt-5. This chain is Probable cyclin-dependent kinase 9 (cdk-9), found in Caenorhabditis elegans.